Consider the following 89-residue polypeptide: Small ribosomal subunit protein uS15 (89 aa).

The tract at residues 1 to 25 (MSLSAEQKGEIVKKHARTASDTGSP) is disordered.

This sequence belongs to the universal ribosomal protein uS15 family. In terms of assembly, part of the 30S ribosomal subunit. Forms a bridge to the 50S subunit in the 70S ribosome, contacting the 23S rRNA.

Functionally, one of the primary rRNA binding proteins, it binds directly to 16S rRNA where it helps nucleate assembly of the platform of the 30S subunit by binding and bridging several RNA helices of the 16S rRNA. In terms of biological role, forms an intersubunit bridge (bridge B4) with the 23S rRNA of the 50S subunit in the ribosome. In Alkalilimnicola ehrlichii (strain ATCC BAA-1101 / DSM 17681 / MLHE-1), this protein is Small ribosomal subunit protein uS15.